Consider the following 425-residue polypeptide: Serine--tRNA ligase (425 aa).

233–235 (TAE) is an L-serine binding site. 264 to 266 (RRE) is a binding site for ATP. Glutamate 287 is a binding site for L-serine. 351–354 (EISS) lines the ATP pocket. Residue serine 385 participates in L-serine binding.

It belongs to the class-II aminoacyl-tRNA synthetase family. Type-1 seryl-tRNA synthetase subfamily. In terms of assembly, homodimer. The tRNA molecule binds across the dimer.

The protein localises to the cytoplasm. It carries out the reaction tRNA(Ser) + L-serine + ATP = L-seryl-tRNA(Ser) + AMP + diphosphate + H(+). The catalysed reaction is tRNA(Sec) + L-serine + ATP = L-seryl-tRNA(Sec) + AMP + diphosphate + H(+). It functions in the pathway aminoacyl-tRNA biosynthesis; selenocysteinyl-tRNA(Sec) biosynthesis; L-seryl-tRNA(Sec) from L-serine and tRNA(Sec): step 1/1. Catalyzes the attachment of serine to tRNA(Ser). Is also able to aminoacylate tRNA(Sec) with serine, to form the misacylated tRNA L-seryl-tRNA(Sec), which will be further converted into selenocysteinyl-tRNA(Sec). The chain is Serine--tRNA ligase from Prochlorococcus marinus (strain AS9601).